Here is a 391-residue protein sequence, read N- to C-terminus: Ribonucleoside-diphosphate reductase small chain (391 aa).

Fe cation-binding residues include D135, E166, and H169. Residue Y173 is part of the active site. Fe cation is bound by residues E229, E263, and H266.

Belongs to the ribonucleoside diphosphate reductase small chain family. Heterodimer of a large and a small subunit. Requires Fe cation as cofactor.

The protein resides in the nucleus. Its subcellular location is the cytoplasm. The catalysed reaction is a 2'-deoxyribonucleoside 5'-diphosphate + [thioredoxin]-disulfide + H2O = a ribonucleoside 5'-diphosphate + [thioredoxin]-dithiol. Functionally, provides the precursors necessary for DNA synthesis. Catalyzes the biosynthesis of deoxyribonucleotides from the corresponding ribonucleotides. This Schizosaccharomyces pombe (strain 972 / ATCC 24843) (Fission yeast) protein is Ribonucleoside-diphosphate reductase small chain (suc22).